The primary structure comprises 52 residues: Venom peptide 4a (52 aa).

An N-terminal signal peptide occupies residues 1 to 23; it reads MRSAILLVIVAIVAILGFLGVNA. 3 AXPX repeats span residues 23–26, 31–34, and 39–42; these read AEPL, AEPN, and AAPL. Residues 24–41 constitute a propeptide that is removed on maturation; the sequence is EPLPSPLAEPNPHAKAAP. A51 is modified (alanine amide).

As to expression, expressed by the venom gland.

It localises to the secreted. In Eumenes pomiformis (Potter wasp), this protein is Venom peptide 4a.